A 435-amino-acid polypeptide reads, in one-letter code: Diguanylate cyclase TpbB (435 aa).

Residues 1–22 (MNRRRRYTGSNPSLRRVLYRAH) lie on the Cytoplasmic side of the membrane. The chain crosses the membrane as a helical span at residues 23–43 (LGVALVAVFTAGLAVTLVGLL). The Periplasmic segment spans residues 44–154 (TLRAYADPNQ…VKGSGGSLLR (111 aa)). Residues 155–175 (FLLTGFAGMVLCLLLTALGAF) traverse the membrane as a helical segment. At 176-435 (YLSRRLVRGI…DSATPEAPPK (260 aa)) the chain is on the cytoplasmic side. The region spanning 183–236 (RGIVGPLDQLAKVAHTVRRERDFEKRVPEAGIAELSQLGEDFNALLDELESWQA) is the HAMP domain. Residues 279–415 (EQLAVLFIDS…GSRRLAELND (137 aa)) enclose the GGDEF domain. 2 residues coordinate Mg(2+): Ser-288 and Asp-330. The Proton acceptor role is filled by Asp-330. A compositionally biased stretch (basic and acidic residues) spans 414-426 (NDPRILQEEKEID). Residues 414–435 (NDPRILQEEKEIDSATPEAPPK) are disordered.

Mg(2+) serves as cofactor. Phosphorylated at both Tyr residues and Ser/Thr residues. Dephosphorylated and inactivated by TpbA.

It localises to the cell inner membrane. It carries out the reaction 2 GTP = 3',3'-c-di-GMP + 2 diphosphate. The protein operates within purine metabolism; 3',5'-cyclic di-GMP biosynthesis. Activity is tightly controlled by YfiR, a small periplasmic protein, and the OmpA/Pal-like outer-membrane lipoprotein YfiB. Diguanylate cyclase activity is inhibited by the specific interaction of YfiR with the TpbB periplasmic domain and is activated by YfiB, which releases the YfiR-mediated repression through sequestration of YfiR to the outer membrane. Activity is also controlled by dephosphorylation of the periplasmic domain by the tyrosine phosphatase TpbA. Catalyzes the synthesis of cyclic-di-GMP (c-di-GMP) via the condensation of 2 GTP molecules. Important for the regulation of biofilm maintenance when exposed to peroxide. Its function is as follows. Part of the YfiB-TpbB-YfiR (or yfiBNR) system, encoding a tripartite signaling module that modulates intracellular c-di-GMP levels. The system is a key regulator of the small colony variant (SCV) phenotype, and plays an important role in biofilm formation and in vivo persistence. The c-di-GMP produced by TpbB/YfiN stimulates the production of the Pel and Psl exopolysaccharides, which promotes surface attachment, generates an SCV phenotype and confers resistance against phagocytosis. This chain is Diguanylate cyclase TpbB, found in Pseudomonas aeruginosa (strain UCBPP-PA14).